Here is a 242-residue protein sequence, read N- to C-terminus: Small ribosomal subunit protein uS2 (242 aa).

Belongs to the universal ribosomal protein uS2 family.

The chain is Small ribosomal subunit protein uS2 from Neisseria meningitidis serogroup C (strain 053442).